Here is a 501-residue protein sequence, read N- to C-terminus: HMG-box protein STE11 (501 aa).

Positions 142 to 153 (PVNMVGSLSGSP) are enriched in polar residues. Disordered regions lie at residues 142–205 (PVNM…KRPL) and 246–293 (YAEM…SLEQ). The span at 192–204 (SRSGSSSSGIKRP) shows a compositional bias: low complexity. A DNA-binding region (HMG box) is located at residues 201-265 (IKRPLNSFML…RHAKEYPDYK (65 aa)). Positions 246–263 (YAEMAQRERERHAKEYPD) are enriched in basic and acidic residues.

In terms of processing, phosphorylated by MAPK2.

It is found in the nucleus. This Pneumocystis carinii protein is HMG-box protein STE11.